The primary structure comprises 534 residues: Blue-light-activated protein (534 aa).

Positions 20–93 (GKDIFFAAVE…QSIRDAIDQR (74 aa)) constitute a PAS domain. Residue Cys-70 is modified to S-4a-FMN cysteine. In terms of domain architecture, PAC spans 94 to 148 (VDISTEILNYRKDGSSFWNALFISPVYNDAGELIYFFASQLDISRRRDAEEALRQ). The region spanning 161-390 (GIAHDFNNLL…TLRLYFPVDE (230 aa)) is the Histidine kinase domain. Phosphohistidine; by autocatalysis is present on His-164. A Response regulatory domain is found at 411-527 (RILIVEDRPD…DLARKVRQVL (117 aa)). Asp-461 is subject to 4-aspartylphosphate.

In terms of processing, FMN binds covalently to cysteine after exposure to blue light and this bond is spontaneously broken in the dark.

The catalysed reaction is ATP + protein L-histidine = ADP + protein N-phospho-L-histidine.. In terms of biological role, photosensitive kinase and response regulator that is involved in increased bacterial virulence upon exposure to light. This is Blue-light-activated protein from Pseudomonas syringae pv. syringae (strain B728a).